The chain runs to 315 residues: Calumenin (315 aa).

Positions 1–19 are cleaved as a signal peptide; sequence MDTRRLLLCLCLWVACVVS. EF-hand domains lie at 68-103, 104-139, 151-186, 188-223, 229-264, and 265-300; these read ESKERLGMIVSKIDLDNDGYVTEGELTAWIKKAQKK, YVYDNVERQWQEFDLNQDGLVSWDEYRNVTYGTYLD, QMMVRDERRFKMADQDGDLIATKEEFTAFLHPEEFD, MKDIVVLETMEDIDKNGDGLIDLEEYIGDMYNHDGD, WVKTEREQFVEFRDKNHDGKMDKEETKDWILPSDYD, and HAEAESRHLVYESDQNKDSKLTREEIVDKYDLFVGS. Ca(2+) is bound by residues Asp-81, Asp-83, Asp-85, Tyr-87, Glu-92, Asp-117, Asn-119, Asp-121, and Glu-128. Asn-131 is a glycosylation site (N-linked (GlcNAc...) asparagine). Positions 164, 166, 168, 175, 201, 203, 205, 212, 242, 244, 246, 248, 253, 278, 280, 282, 284, and 289 each coordinate Ca(2+). A Prevents secretion from ER motif is present at residues 312 to 315; it reads HDEF.

The protein belongs to the CREC family. As to quaternary structure, interacts with ggcx.

The protein resides in the endoplasmic reticulum membrane. It is found in the golgi apparatus. Its subcellular location is the secreted. It localises to the melanosome. The protein localises to the sarcoplasmic reticulum lumen. In terms of biological role, involved in regulation of vitamin K-dependent carboxylation of multiple N-terminal glutamate residues. Seems to inhibit gamma-carboxylase ggcx. Binds 7 calcium ions with a low affinity. The chain is Calumenin (calu) from Xenopus tropicalis (Western clawed frog).